Reading from the N-terminus, the 422-residue chain is MAM and fibronectin type III domain-containing protein 1 (422 aa).

The region spanning 1 to 75 (KFYYHMYGAT…VSLMEGICAG (75 aa)) is the MAM domain. Fibronectin type-III domains lie at 2-74 (FYYH…GICA), 196-286 (PGWN…QART), and 291-386 (PSRA…YIVT).

Component of the acid-insoluble and acid-soluble organic matrix of the aragonitic skeleton (at protein level).

It localises to the secreted. The protein is MAM and fibronectin type III domain-containing protein 1 of Acropora millepora (Staghorn coral).